A 227-amino-acid chain; its full sequence is UPF0758 protein Spro_4842 (227 aa).

Residues 105–227 (AMLNPRMTQH…CVSFAERGWL (123 aa)) form the MPN domain. Histidine 176, histidine 178, and aspartate 189 together coordinate Zn(2+). The JAMM motif motif lies at 176–189 (HNHPSGKAEPSHAD).

This sequence belongs to the UPF0758 family. YicR subfamily.

The chain is UPF0758 protein Spro_4842 from Serratia proteamaculans (strain 568).